The sequence spans 302 residues: Sulfate adenylyltransferase subunit 2 (302 aa).

Belongs to the PAPS reductase family. CysD subfamily. Heterodimer composed of CysD, the smaller subunit, and CysN.

The catalysed reaction is sulfate + ATP + H(+) = adenosine 5'-phosphosulfate + diphosphate. It functions in the pathway sulfur metabolism; hydrogen sulfide biosynthesis; sulfite from sulfate: step 1/3. Its function is as follows. With CysN forms the ATP sulfurylase (ATPS) that catalyzes the adenylation of sulfate producing adenosine 5'-phosphosulfate (APS) and diphosphate, the first enzymatic step in sulfur assimilation pathway. APS synthesis involves the formation of a high-energy phosphoric-sulfuric acid anhydride bond driven by GTP hydrolysis by CysN coupled to ATP hydrolysis by CysD. This is Sulfate adenylyltransferase subunit 2 from Aeromonas hydrophila subsp. hydrophila (strain ATCC 7966 / DSM 30187 / BCRC 13018 / CCUG 14551 / JCM 1027 / KCTC 2358 / NCIMB 9240 / NCTC 8049).